The following is a 276-amino-acid chain: MPELPEVETVVRTLRGLVMGKTIERVSVHLARIVRQPDDVEAFKSLLVGQTIQDIQRRAKFIQFFLNEDVLVSHLRMEGRYGVYQADDPVEKHTHVVFHFTDGTELRYRDVRQFGTMDLFPKGKETTIGPLAKLGVEPLDKSFTPEVLGKLLKGRSTKIKPLLLNQECIVGLGNIYVDESLFKAGIHPEKPAGKLTDKEVIRLHESIVSTLQEAVEQGGSSIKSYVNGQGEMGMFQQSLLVYGRKDEACTKCGAEIIRFVVGGRGTHICPDCQKNQ.

The Schiff-base intermediate with DNA role is filled by P2. E3 acts as the Proton donor in catalysis. K60 (proton donor; for beta-elimination activity) is an active-site residue. H93, R112, and R155 together coordinate DNA. The FPG-type zinc-finger motif lies at 240–274; that stretch reads LVYGRKDEACTKCGAEIIRFVVGGRGTHICPDCQK. The Proton donor; for delta-elimination activity role is filled by R264.

Belongs to the FPG family. In terms of assembly, monomer. It depends on Zn(2+) as a cofactor.

It catalyses the reaction Hydrolysis of DNA containing ring-opened 7-methylguanine residues, releasing 2,6-diamino-4-hydroxy-5-(N-methyl)formamidopyrimidine.. The enzyme catalyses 2'-deoxyribonucleotide-(2'-deoxyribose 5'-phosphate)-2'-deoxyribonucleotide-DNA = a 3'-end 2'-deoxyribonucleotide-(2,3-dehydro-2,3-deoxyribose 5'-phosphate)-DNA + a 5'-end 5'-phospho-2'-deoxyribonucleoside-DNA + H(+). Involved in base excision repair of DNA damaged by oxidation or by mutagenic agents. Acts as a DNA glycosylase that recognizes and removes damaged bases. Has a preference for oxidized purines, such as 7,8-dihydro-8-oxoguanine (8-oxoG). Has AP (apurinic/apyrimidinic) lyase activity and introduces nicks in the DNA strand. Cleaves the DNA backbone by beta-delta elimination to generate a single-strand break at the site of the removed base with both 3'- and 5'-phosphates. This chain is Formamidopyrimidine-DNA glycosylase, found in Brevibacillus brevis (strain 47 / JCM 6285 / NBRC 100599).